Here is a 67-residue protein sequence, read N- to C-terminus: UPF0337 protein msl9551 (67 aa).

The protein belongs to the UPF0337 (CsbD) family.

The polypeptide is UPF0337 protein msl9551 (Mesorhizobium japonicum (strain LMG 29417 / CECT 9101 / MAFF 303099) (Mesorhizobium loti (strain MAFF 303099))).